A 414-amino-acid chain; its full sequence is Dimethylsulfoniopropionate lyase DddY (414 aa).

The first 18 residues, M1 to A18, serve as a signal peptide directing secretion.

Belongs to the DMSP lyase DddY family.

It is found in the periplasm. The enzyme catalyses S,S-dimethyl-beta-propiothetin = acrylate + dimethyl sulfide + H(+). Its function is as follows. Catalyzes the cleavage of dimethylsulfoniopropionate (DMSP) into dimethyl sulfide (DMS) and acrylate. This Shewanella woodyi (strain ATCC 51908 / MS32) protein is Dimethylsulfoniopropionate lyase DddY.